A 100-amino-acid polypeptide reads, in one-letter code: Large ribosomal subunit protein uL23 (100 aa).

The protein belongs to the universal ribosomal protein uL23 family. In terms of assembly, part of the 50S ribosomal subunit. Contacts protein L29, and trigger factor when it is bound to the ribosome.

One of the early assembly proteins it binds 23S rRNA. One of the proteins that surrounds the polypeptide exit tunnel on the outside of the ribosome. Forms the main docking site for trigger factor binding to the ribosome. This chain is Large ribosomal subunit protein uL23, found in Shewanella piezotolerans (strain WP3 / JCM 13877).